A 29-amino-acid chain; its full sequence is uncharacterized protein (29 aa).

Its subcellular location is the plastid. The protein resides in the chloroplast. This is an uncharacterized protein from Trieres chinensis (Marine centric diatom).